A 681-amino-acid chain; its full sequence is Chaperone protein htpG (681 aa).

The segment at 1–326 (MQKGNIGVTT…SPDIPLNVSR (326 aa)) is a; substrate-binding. The segment at 327–545 (SYLQSDSNVK…YMRRMKEMAN (219 aa)) is b. A c region spans residues 546 to 681 (IQAGMSFYGE…NFVKRSIELI (136 aa)). The disordered stretch occupies residues 601-620 (DALKKKQEGKKDEDIPTAEK).

It belongs to the heat shock protein 90 family. As to quaternary structure, homodimer.

Its subcellular location is the cytoplasm. In terms of biological role, molecular chaperone. Has ATPase activity. The protein is Chaperone protein htpG of Bacteroides fragilis (strain 638R).